The following is a 214-amino-acid chain: Single-pass membrane and coiled-coil domain-containing protein 1 (214 aa).

Residues 5–40 (TTTLISLKEAMKRVDNKLRALDTQFKELDVTKDNLT) are a coiled coil. The helical transmembrane segment at 59 to 81 (IWTAALALGFTSMELNIVYSYVI) threads the bilayer. The tract at residues 193–214 (KQAQDPENSRAPLKELMPPVKD) is disordered.

The protein resides in the membrane. The chain is Single-pass membrane and coiled-coil domain-containing protein 1 (Smco1) from Mus musculus (Mouse).